We begin with the raw amino-acid sequence, 332 residues long: Beta-ketoacyl-[acyl-carrier-protein] synthase III 5 (332 aa).

Residues Cys-111 and His-253 contribute to the active site. The segment at 254–258 (QANAR) is ACP-binding. Residue Asn-283 is part of the active site.

The protein belongs to the thiolase-like superfamily. FabH family. As to quaternary structure, homodimer.

The protein localises to the cytoplasm. The catalysed reaction is malonyl-[ACP] + acetyl-CoA + H(+) = 3-oxobutanoyl-[ACP] + CO2 + CoA. It functions in the pathway lipid metabolism; fatty acid biosynthesis. Catalyzes the condensation reaction of fatty acid synthesis by the addition to an acyl acceptor of two carbons from malonyl-ACP. Catalyzes the first condensation reaction which initiates fatty acid synthesis and may therefore play a role in governing the total rate of fatty acid production. Possesses both acetoacetyl-ACP synthase and acetyl transacylase activities. Its substrate specificity determines the biosynthesis of branched-chain and/or straight-chain of fatty acids. This is Beta-ketoacyl-[acyl-carrier-protein] synthase III 5 from Streptomyces coelicolor (strain ATCC BAA-471 / A3(2) / M145).